The primary structure comprises 1310 residues: Cadherin-related family member 2 (1310 aa).

The N-terminal stretch at 1-20 is a signal peptide; that stretch reads MAQLWLSCFLLPALVVSVAA. Residues 21–1154 are Extracellular-facing; the sequence is NVAPKFLANM…ESDLSKQLIS (1134 aa). Cadherin domains are found at residues 27–124, 125–241, and 242–353; these read LANM…APVF, QNTA…DPQF, and VREF…KPEF. N29, N134, N182, N188, N195, N300, N355, N371, N401, N460, N565, N600, N616, N632, N680, N696, N701, N775, N821, N871, N877, N911, N932, and N1107 each carry an N-linked (GlcNAc...) asparagine glycan. 6 consecutive Cadherin domains span residues 368–480, 481–586, 586–695, 696–808, 810–928, and 930–1058; these read AQVN…RPTF, PQSL…APVV, VSGS…LPIF, NQSS…PPTL, VASL…APYF, and PENK…TPKE. A helical membrane pass occupies residues 1155–1175; that stretch reads VIIGLGVALLLVLVIMTMAFV. The Cytoplasmic portion of the chain corresponds to 1176–1310; sequence CVRKSYNRKL…TNAGLDTTDL (135 aa). The segment at 1180 to 1310 is mediates interaction with USH1C and MYO7B and is required for proper localization to microvilli tips and function in microvilli organization; that stretch reads SYNRKLQAMK…TNAGLDTTDL (131 aa). At S1248 the chain carries Phosphoserine. Positions 1259–1268 are enriched in basic and acidic residues; that stretch reads NSQEIKEHRP. Residues 1259-1310 form a disordered region; the sequence is NSQEIKEHRPPHTPPEPDPEPLSVVLLGRQAGASGQLEGPSYTNAGLDTTDL. S1299 bears the Phosphoserine mark. Residues 1299-1310 are compositionally biased toward polar residues; the sequence is SYTNAGLDTTDL.

In terms of assembly, part of the IMAC/intermicrovillar adhesion complex/intermicrovillar tip-link complex composed of ANKS4B, MYO7B, USH1C, CDHR2 and CDHR5. Interacts with MAST2. Interacts (via cytoplasmic domain) with USH1C and MYO7B; required for proper localization of CDHR2 to microvilli tips and its function in brush border differentiation. Highly expressed in liver, kidney and colon. Moderately expressed in small intestine. Down-regulated in a number of liver and colon cancers. Expressed in duodenum with higher expression in enterocytes along the villus axis and lower expression in crypts (at protein level).

It is found in the apical cell membrane. Its subcellular location is the cell projection. The protein resides in the microvillus membrane. It localises to the cell junction. Its function is as follows. Intermicrovillar adhesion molecule that forms, via its extracellular domain, calcium-dependent heterophilic complexes with CDHR5 on adjacent microvilli. Thereby, controls the packing of microvilli at the apical membrane of epithelial cells. Through its cytoplasmic domain, interacts with microvillus cytoplasmic proteins to form the intermicrovillar adhesion complex/IMAC. This complex plays a central role in microvilli and epithelial brush border differentiation. May also play a role in cell-cell adhesion and contact inhibition in epithelial cells. This Homo sapiens (Human) protein is Cadherin-related family member 2.